A 341-amino-acid chain; its full sequence is Formimidoylglutamase (341 aa).

Mn(2+) is bound by residues histidine 133, aspartate 162, histidine 164, aspartate 166, cysteine 253, and aspartate 255.

The protein belongs to the arginase family. Requires Mn(2+) as cofactor.

It catalyses the reaction N-formimidoyl-L-glutamate + H2O = formamide + L-glutamate. The protein operates within amino-acid degradation; L-histidine degradation into L-glutamate; L-glutamate from N-formimidoyl-L-glutamate (hydrolase route): step 1/1. Functionally, catalyzes the conversion of N-formimidoyl-L-glutamate to L-glutamate and formamide. The polypeptide is Formimidoylglutamase (Aromatoleum aromaticum (strain DSM 19018 / LMG 30748 / EbN1) (Azoarcus sp. (strain EbN1))).